The sequence spans 424 residues: Histidine--tRNA ligase (424 aa).

This sequence belongs to the class-II aminoacyl-tRNA synthetase family. Homodimer.

The protein localises to the cytoplasm. The enzyme catalyses tRNA(His) + L-histidine + ATP = L-histidyl-tRNA(His) + AMP + diphosphate + H(+). This Yersinia pestis bv. Antiqua (strain Antiqua) protein is Histidine--tRNA ligase.